The following is a 236-amino-acid chain: Pyridoxine 5'-phosphate synthase (236 aa).

Residue asparagine 6 coordinates 3-amino-2-oxopropyl phosphate. 8-9 (DH) serves as a coordination point for 1-deoxy-D-xylulose 5-phosphate. Arginine 17 contributes to the 3-amino-2-oxopropyl phosphate binding site. Histidine 42 serves as the catalytic Proton acceptor. The 1-deoxy-D-xylulose 5-phosphate site is built by arginine 44 and histidine 49. The active-site Proton acceptor is the glutamate 69. Threonine 99 contacts 1-deoxy-D-xylulose 5-phosphate. Histidine 190 (proton donor) is an active-site residue. 3-amino-2-oxopropyl phosphate contacts are provided by residues glycine 191 and 212 to 213 (GH).

Belongs to the PNP synthase family. In terms of assembly, homooctamer; tetramer of dimers.

It is found in the cytoplasm. It catalyses the reaction 3-amino-2-oxopropyl phosphate + 1-deoxy-D-xylulose 5-phosphate = pyridoxine 5'-phosphate + phosphate + 2 H2O + H(+). It functions in the pathway cofactor biosynthesis; pyridoxine 5'-phosphate biosynthesis; pyridoxine 5'-phosphate from D-erythrose 4-phosphate: step 5/5. Its function is as follows. Catalyzes the complicated ring closure reaction between the two acyclic compounds 1-deoxy-D-xylulose-5-phosphate (DXP) and 3-amino-2-oxopropyl phosphate (1-amino-acetone-3-phosphate or AAP) to form pyridoxine 5'-phosphate (PNP) and inorganic phosphate. The chain is Pyridoxine 5'-phosphate synthase from Chloroherpeton thalassium (strain ATCC 35110 / GB-78).